Consider the following 281-residue polypeptide: NAD-dependent protein deacetylase 1 (281 aa).

The Deacetylase sirtuin-type domain maps to 1–281 (MEEGAALEGV…FDQILDALDL (281 aa)). Residues 24-44 (GAGV…GSLN) and 102-105 (QNVD) contribute to the NAD(+) site. His120 functions as the Proton acceptor in the catalytic mechanism. Positions 128, 131, 183, and 186 each coordinate Zn(2+). NAD(+) contacts are provided by residues 224–226 (GSS), 250–252 (NGG), and Val268.

It belongs to the sirtuin family. Class II subfamily. Zn(2+) is required as a cofactor.

The protein localises to the cytoplasm. It catalyses the reaction N(6)-acetyl-L-lysyl-[protein] + NAD(+) + H2O = 2''-O-acetyl-ADP-D-ribose + nicotinamide + L-lysyl-[protein]. Functionally, NAD-dependent protein deacetylase which modulates the activities of several enzymes which are inactive in their acetylated form. This is NAD-dependent protein deacetylase 1 from Corynebacterium efficiens (strain DSM 44549 / YS-314 / AJ 12310 / JCM 11189 / NBRC 100395).